The following is a 494-amino-acid chain: NADPH:adrenodoxin oxidoreductase, mitochondrial (494 aa).

The transit peptide at 1-34 directs the protein to the mitochondrion; that stretch reads MAPRCWHWWRWSAWSGLRPSPSRSTPTPGFCQKF. FAD-binding residues include Ala-51, Glu-72, Leu-80, and Val-116. NADP(+) contacts are provided by residues 187–190, 231–232, and Glu-243; these read QGNV and RR. Ser-313 carries the phosphoserine modification. FAD contacts are provided by residues Trp-401 and 408–410; that span reads GVI. An NADP(+)-binding site is contributed by Gly-408.

It belongs to the ferredoxin--NADP reductase type 1 family. As to quaternary structure, monomer. Interacts directly with FDX1. FAD serves as cofactor. Expressed in the adrenal, testis and ovary and to a lesser extent in the liver and kidney.

The protein localises to the mitochondrion inner membrane. The enzyme catalyses 2 reduced [adrenodoxin] + NADP(+) + H(+) = 2 oxidized [adrenodoxin] + NADPH. It catalyses the reaction 2 reduced [2Fe-2S]-[ferredoxin] + NADP(+) + H(+) = 2 oxidized [2Fe-2S]-[ferredoxin] + NADPH. Its pathway is steroid metabolism; cholesterol metabolism. Its function is as follows. Serves as the first electron transfer protein in all the mitochondrial P450 systems including cholesterol side chain cleavage in all steroidogenic tissues, steroid 11-beta hydroxylation in the adrenal cortex, 25-OH-vitamin D3-24 hydroxylation in the kidney, and sterol C-27 hydroxylation in the liver. Also acts as a ferredoxin--NADP(+) reductase essential for coenzyme Q biosynthesis: together with FDX2, transfers the electrons required for the hydroxylation reaction performed by COQ6. In Mus musculus (Mouse), this protein is NADPH:adrenodoxin oxidoreductase, mitochondrial (Fdxr).